Here is a 313-residue protein sequence, read N- to C-terminus: Short-chain dehydrogenase/reductase family 9C member 7 (313 aa).

29 to 53 (FITGCDSGFGNLLAKQLVDRGMKVL) contacts NADP(+). A substrate-binding site is contributed by Ser-160. The active-site Proton acceptor is Tyr-172. Phosphoserine is present on Ser-185.

It belongs to the short-chain dehydrogenases/reductases (SDR) family. Highly expressed in liver.

It localises to the cytoplasm. It carries out the reaction a N-[omega-(9R,10R)-epoxy-(13R)-hydroxy-(11E)-octadecenoyloxy]acyl-beta-D-glucosyl-(1&lt;-&gt;1)-sphing-4E-enine + NAD(+) = a N-[omega-(9R,10R)-epoxy-13-oxo-(11E)-octadecenoyloxy]acyl-beta-D-glucosyl-(1&lt;-&gt;1)-sphing-4E-enine + NADH + H(+). The catalysed reaction is a N-[omega-(9R,10R)-epoxy-(13R)-hydroxy-(11E)-octadecenoyloxy]-acylsphing-4E-enine + NAD(+) = a N-[omega-(9R,10R)-epoxy-13-oxo-(11E)-octadecenoyloxy]-acylsphing-4E-enine + NADH + H(+). Plays a crucial role in the formation of the epidermal permeability barrier. Catalyzes the NAD+-dependent dehydrogenation of the linoleate 9,10-trans-epoxy-11E-13-alcohol esterified in omega-O-acylceramides (such as in N-[omega-(9R,10R)-epoxy-(13R)-hydroxy-(11E)-octadecenoyloxy]-acylsphing-4E-enine) to the corresponding 13-ketone, the reactive moiety required for binding of epidermal ceramides to proteins. Displays weak conversion of all-trans-retinal to all-trans-retinol in the presence of NADH. Has apparently no steroid dehydrogenase activity. This Mus musculus (Mouse) protein is Short-chain dehydrogenase/reductase family 9C member 7 (Sdr9c7).